Reading from the N-terminus, the 486-residue chain is Galactose-3-O-sulfotransferase 4 (486 aa).

The Cytoplasmic portion of the chain corresponds to 1–18 (MGPLSPARTLRLWGPRSL). The helical; Signal-anchor for type II membrane protein transmembrane segment at 19–39 (GVALGVFMTIGFALQLLGGPF) threads the bilayer. Residues 40–486 (QRRLPGLQLR…PLKTSRPLSP (447 aa)) are Lumenal-facing. N374 is a glycosylation site (N-linked (GlcNAc...) asparagine).

It belongs to the galactose-3-O-sulfotransferase family. It depends on Mn(2+) as a cofactor. Expressed mainly in placenta, thymus, testis, ovary, spinal cord, trachea and adrenal gland and at low levels in brain, lung, spleen, prostate, small intestine, colon, stomach thyroid and lymph node.

The protein resides in the golgi apparatus. The protein localises to the golgi stack membrane. The protein operates within protein modification; carbohydrate sulfation. Functionally, catalyzes the transfer of sulfate to beta-1,3-linked galactose residues in O-linked glycoproteins. Good substrates include asialofetuin, Gal-beta-1,3-GalNAc and Gal-beta-1,3 (GlcNAc-beta-1,6)GalNAc. The polypeptide is Galactose-3-O-sulfotransferase 4 (GAL3ST4) (Homo sapiens (Human)).